The sequence spans 475 residues: Ammonium transporter 2 (475 aa).

11 helical membrane-spanning segments follow: residues Ala-27–Val-47, Ser-55–Tyr-75, Leu-120–Leu-140, Trp-148–Trp-168, Gly-183–Gly-203, Val-218–Gly-238, Thr-254–Gly-274, Ile-279–Ile-299, Trp-302–Ile-322, Leu-336–Phe-356, and Ala-389–Ile-409.

This sequence belongs to the ammonia transporter channel (TC 1.A.11.2) family. Higher expression in shoots than roots.

The protein localises to the cell membrane. Functionally, high affinity ammonium transporter that may play an important role in moving ammonium between the apoplast and symplast of cells throughout the plant. Does not transport methylammonium. The protein is Ammonium transporter 2 (AMT2) of Arabidopsis thaliana (Mouse-ear cress).